The primary structure comprises 246 residues: B-cell receptor-associated protein 31 (246 aa).

Topologically, residues Ser-2–Thr-6 are lumenal. The chain crosses the membrane as a helical span at residues Ala-7–Ile-27. Residues Ser-28–Leu-43 lie on the Cytoplasmic side of the membrane. Residues Leu-44–Ile-64 traverse the membrane as a helical segment. Residues Asp-65–Asn-102 lie on the Lumenal side of the membrane. The helical transmembrane segment at Leu-103–Ile-123 threads the bilayer. At Ser-124–Glu-246 the chain is on the cytoplasmic side. A coiled-coil region spans residues Gly-165 to Val-237. Positions Lys-243–Glu-246 match the Di-lysine motif motif.

This sequence belongs to the BCAP29/BCAP31 family. Homodimer and heterodimer with BCAP29. Binds CASP8 (isoform 9) as a complex containing BCAP31, BCAP29, BCL2 and/or BCL2L1. Forms a complex (via C-terminus) with TOMM40 which mediates the translocation of components of the mitochondrial membrane respiratory chain NADH dehydrogenase (Complex I) from the cytosol to the mitochondria; within the complex BCAP31 interacts directly with unprocessed and processed NDUFS4 and NDUFB11. Interacts with VDAC1. Interacts with VAMP3, VAMP1 and membrane IgD immunoglobulins. Interacts with HACD2. Interacts with DNM1L; may form part of a larger protein complex at the endoplasmic reticulum-mitochondrial interface during mitochondrial fission. In terms of assembly, (Microbial infection) Interacts (via C-terminus) with HRSV membrane protein SH; this interaction is direct. Post-translationally, cleaved by CASP8 and other caspases. Ubiquitous. Highly expressed in neurons and discrete endocrine cells.

It localises to the endoplasmic reticulum membrane. It is found in the endoplasmic reticulum-Golgi intermediate compartment membrane. Its function is as follows. Functions as a chaperone protein. Is one of the most abundant endoplasmic reticulum (ER) proteins. Plays a role in the export of secreted proteins in the ER, the recognition of abnormally folded protein and their targeting to the ER associated-degradation (ERAD). Also serves as a cargo receptor for the export of transmembrane proteins. Plays a role in the assembly of the mitochondrial membrane respiratory chain NADH dehydrogenase (Complex I) by stimulating the translocation of NDUFS4 and NDUFB11 from the cytosol to the mitochondria via interaction with TOMM40. In response to ER stress, delocalizes from the ER-mitochondria contact sites and binds BCL2. May be involved in CASP8-mediated apoptosis. This is B-cell receptor-associated protein 31 from Homo sapiens (Human).